Consider the following 428-residue polypeptide: Serine--tRNA ligase (428 aa).

Threonine 235–glutamate 237 is a binding site for L-serine. Arginine 266–glutamate 268 is a binding site for ATP. Position 289 (glutamate 289) interacts with L-serine. Glutamate 353–serine 356 is a binding site for ATP. An L-serine-binding site is contributed by serine 389.

Belongs to the class-II aminoacyl-tRNA synthetase family. Type-1 seryl-tRNA synthetase subfamily. In terms of assembly, homodimer. The tRNA molecule binds across the dimer.

Its subcellular location is the cytoplasm. It catalyses the reaction tRNA(Ser) + L-serine + ATP = L-seryl-tRNA(Ser) + AMP + diphosphate + H(+). The enzyme catalyses tRNA(Sec) + L-serine + ATP = L-seryl-tRNA(Sec) + AMP + diphosphate + H(+). The protein operates within aminoacyl-tRNA biosynthesis; selenocysteinyl-tRNA(Sec) biosynthesis; L-seryl-tRNA(Sec) from L-serine and tRNA(Sec): step 1/1. Catalyzes the attachment of serine to tRNA(Ser). Is also able to aminoacylate tRNA(Sec) with serine, to form the misacylated tRNA L-seryl-tRNA(Sec), which will be further converted into selenocysteinyl-tRNA(Sec). This Shewanella frigidimarina (strain NCIMB 400) protein is Serine--tRNA ligase.